The following is a 307-amino-acid chain: Porphobilinogen deaminase (307 aa).

S-(dipyrrolylmethanemethyl)cysteine is present on Cys241.

Belongs to the HMBS family. As to quaternary structure, monomer. The cofactor is dipyrromethane.

The catalysed reaction is 4 porphobilinogen + H2O = hydroxymethylbilane + 4 NH4(+). The protein operates within porphyrin-containing compound metabolism; protoporphyrin-IX biosynthesis; coproporphyrinogen-III from 5-aminolevulinate: step 2/4. Functionally, tetrapolymerization of the monopyrrole PBG into the hydroxymethylbilane pre-uroporphyrinogen in several discrete steps. In Coxiella burnetii (strain CbuG_Q212) (Coxiella burnetii (strain Q212)), this protein is Porphobilinogen deaminase.